Here is a 194-residue protein sequence, read N- to C-terminus: Isopentenyl-diphosphate Delta-isomerase (194 aa).

Positions 27 and 34 each coordinate Mn(2+). Positions 32 to 166 (ALHLAFSCHV…PWAFSPWLTL (135 aa)) constitute a Nudix hydrolase domain. The active site involves Cys69. A Mn(2+)-binding site is contributed by His71. Residue Glu89 participates in Mg(2+) binding. Glu116 and Glu118 together coordinate Mn(2+). Residue Glu118 is part of the active site.

Belongs to the IPP isomerase type 1 family. It depends on Mg(2+) as a cofactor. The cofactor is Mn(2+).

It localises to the cytoplasm. The catalysed reaction is isopentenyl diphosphate = dimethylallyl diphosphate. Its pathway is isoprenoid biosynthesis; dimethylallyl diphosphate biosynthesis; dimethylallyl diphosphate from isopentenyl diphosphate: step 1/1. Its function is as follows. Catalyzes the 1,3-allylic rearrangement of the homoallylic substrate isopentenyl (IPP) to its highly electrophilic allylic isomer, dimethylallyl diphosphate (DMAPP). The polypeptide is Isopentenyl-diphosphate Delta-isomerase (Clavibacter michiganensis subsp. michiganensis (strain NCPPB 382)).